We begin with the raw amino-acid sequence, 465 residues long: Light-independent protochlorophyllide reductase subunit N (465 aa).

Positions 22, 47, and 107 each coordinate [4Fe-4S] cluster.

The protein belongs to the BchN/ChlN family. As to quaternary structure, protochlorophyllide reductase is composed of three subunits; ChlL, ChlN and ChlB. Forms a heterotetramer of two ChlB and two ChlN subunits. The cofactor is [4Fe-4S] cluster.

It localises to the plastid. The protein resides in the chloroplast. It carries out the reaction chlorophyllide a + oxidized 2[4Fe-4S]-[ferredoxin] + 2 ADP + 2 phosphate = protochlorophyllide a + reduced 2[4Fe-4S]-[ferredoxin] + 2 ATP + 2 H2O. Its pathway is porphyrin-containing compound metabolism; chlorophyll biosynthesis (light-independent). Its function is as follows. Component of the dark-operative protochlorophyllide reductase (DPOR) that uses Mg-ATP and reduced ferredoxin to reduce ring D of protochlorophyllide (Pchlide) to form chlorophyllide a (Chlide). This reaction is light-independent. The NB-protein (ChlN-ChlB) is the catalytic component of the complex. In Marchantia polymorpha (Common liverwort), this protein is Light-independent protochlorophyllide reductase subunit N.